The following is a 238-amino-acid chain: Ribonuclease PH (238 aa).

Residues Arg-86 and 124 to 126 (GTR) each bind phosphate.

This sequence belongs to the RNase PH family. Homohexameric ring arranged as a trimer of dimers.

The enzyme catalyses tRNA(n+1) + phosphate = tRNA(n) + a ribonucleoside 5'-diphosphate. Its function is as follows. Phosphorolytic 3'-5' exoribonuclease that plays an important role in tRNA 3'-end maturation. Removes nucleotide residues following the 3'-CCA terminus of tRNAs; can also add nucleotides to the ends of RNA molecules by using nucleoside diphosphates as substrates, but this may not be physiologically important. Probably plays a role in initiation of 16S rRNA degradation (leading to ribosome degradation) during starvation. The sequence is that of Ribonuclease PH from Geobacter sulfurreducens (strain ATCC 51573 / DSM 12127 / PCA).